The following is a 492-amino-acid chain: Myocyte-specific enhancer factor 2A (492 aa).

The region spanning 3–57 (RKKIQITRIMDERNRQVTFTKRKFGLMKKAYELSVLCDCEIALIIFNSSNKLFQY) is the MADS-box domain. Positions 58–86 (ASTDMDKVLLKYTEYNEPHESRTNSDIVE) form a DNA-binding region, mef2-type. Position 59 is a phosphoserine; by CK2 (serine 59). Serine 98 is modified (phosphoserine). Residues 183–227 (PQATLHRNVSPGAPQRPPSTGSAGGMLSTSDLTVPNGAGSSPVGN) are disordered. The span at 209 to 227 (LSTSDLTVPNGAGSSPVGN) shows a compositional bias: polar residues. Serine 235 carries the post-translational modification Phosphoserine. The tract at residues 242 to 270 (TGANSLGKVMPTKSPPPPGGGSLGMNSRK) is disordered. An N6-acetyllysine modification is found at lysine 249. The residue at position 255 (serine 255) is a Phosphoserine. A required for interaction with MAPKs region spans residues 266–283 (MNSRKPDLRVVIPPSSKG). A phosphothreonine; by MAPK7 and MAPK14 mark is found at threonine 304 and threonine 311. Serine 347 is subject to Phosphoserine; by MAPK7. Positions 382–394 (SNLSINTNQNINI) are enriched in polar residues. The tract at residues 382 to 492 (SNLSINTNQN…KRMRMDAWVT (111 aa)) is disordered. Lysine 395 bears the N6-acetyllysine; alternate mark. Lysine 395 is covalently cross-linked (Glycyl lysine isopeptide (Lys-Gly) (interchain with G-Cter in SUMO); alternate). A Phosphoserine; by CDK5 modification is found at serine 400. Threonine 407 is subject to Phosphothreonine. Residues 417 to 430 (PQPPPPPPQAPQPQ) show a composition bias toward pro residues. Position 438 is a phosphoserine; by MAPK (serine 438). The segment covering 438–451 (SPVDSLSSSSSSYD) has biased composition (low complexity). Composition is skewed to basic and acidic residues over residues 452–462 (GSDREDPRGDF) and 473–492 (NSED…AWVT).

In terms of assembly, binds DNA as a homo- or heterodimer. Dimerizes with MEF2D. Interacts with HDAC7. Interacts with PIAS1; the interaction enhances sumoylation. Interacts with HDAC4, HDAC9 and SLC2A4RG. Interacts (via the N-terminal) with MAPK7; the interaction results in the phosphorylation and transcriptional activity of MEF2A. In terms of processing, constitutive phosphorylation on Ser-400 promotes Lys-395 sumoylation thus preventing acetylation at this site. Dephosphorylation on Ser-400 by PPP3CA upon neuron depolarization promotes a switch from sumoylation to acetylation on residue Lys-395 leading to inhibition of dendrite claw differentiation. Phosphorylation on Thr-304 and Thr-311 are the main sites involved in p38 MAPK signaling and activate transcription. Phosphorylated on these sites by MAPK14/p38alpha and MAPK11/p38beta, but not by MAPK13/p38delta nor by MAPK12/p38gamma. Phosphorylation on Ser-400 by CDK5 induced by neurotoxicity inhibits MEF2A transcriptional activation leading to apoptosis of cortical neurons. Phosphorylation on Thr-304, Thr-311 and Ser-347 can be induced by EGF. Post-translationally, sumoylation on Lys-395 is enhanced by PIAS1 and represses transcriptional activity. Phosphorylation on Ser-400 is required for sumoylation. Has no effect on nuclear location nor on DNA binding. Sumoylated with SUMO1 and, to a lesser extent with SUMO2 and SUMO3. PIASx facilitates sumoylation in postsynaptic dendrites in the cerebellar cortex and promotes their morphogenesis. Acetylation on Lys-395 activates transcriptional activity. Acetylated by p300 on several sites in diffentiating myocytes. Acetylation on Lys-4 increases DNA binding and transactivation. Hyperacetylation by p300 leads to enhanced cardiac myocyte growth and heart failure. In terms of processing, proteolytically cleaved in cerebellar granule neurons on several sites by caspase 3 and caspase 7 following neurotoxicity. Preferentially cleaves the CDK5-mediated hyperphosphorylated form which leads to neuron apoptosis and transcriptional inactivation.

It localises to the nucleus. Its function is as follows. Transcriptional activator which binds specifically to the MEF2 element, 5'-YTA[AT](4)TAR-3', found in numerous muscle-specific genes. Also involved in the activation of numerous growth factor- and stress-induced genes. Mediates cellular functions not only in skeletal and cardiac muscle development, but also in neuronal differentiation and survival. Plays diverse roles in the control of cell growth, survival and apoptosis via p38 MAPK signaling in muscle-specific and/or growth factor-related transcription. In cerebellar granule neurons, phosphorylated and sumoylated MEF2A represses transcription of NUR77 promoting synaptic differentiation. Associates with chromatin to the ZNF16 promoter. The chain is Myocyte-specific enhancer factor 2A (MEF2A) from Bos taurus (Bovine).